A 264-amino-acid chain; its full sequence is tRNA pseudouridine synthase A (264 aa).

Residue Asp51 is the Nucleophile of the active site. Tyr109 serves as a coordination point for substrate.

It belongs to the tRNA pseudouridine synthase TruA family. As to quaternary structure, homodimer.

The catalysed reaction is uridine(38/39/40) in tRNA = pseudouridine(38/39/40) in tRNA. Formation of pseudouridine at positions 38, 39 and 40 in the anticodon stem and loop of transfer RNAs. This is tRNA pseudouridine synthase A from Polaromonas naphthalenivorans (strain CJ2).